Consider the following 358-residue polypeptide: Src kinase-associated phosphoprotein 2 (358 aa).

Phosphoserine is present on residues Ser-5 and Ser-9. Positions 14 to 64 (PEEIRNLLADVETFVADTLKGENLSKKAKEKRESLIKKIKDVKSVYLQEFQ) are homodimerization. Residue Tyr-75 is modified to Phosphotyrosine. A phosphoserine mark is found at Ser-87 and Ser-90. The 104-residue stretch at 116–219 (FVIKAGYLEK…WVQQLKFILQ (104 aa)) folds into the PH domain. Residues Tyr-151 and Tyr-197 each carry the phosphotyrosine modification. Ser-223 is subject to Phosphoserine. Positions 232–292 (ERGELYDDVD…RDSVHHTSGD (61 aa)) are disordered. The span at 255–270 (IDDEIYEELPEEEEDT) shows a compositional bias: acidic residues. Phosphotyrosine; by FYN is present on Tyr-260. Residues Ser-272, Ser-282, and Ser-285 each carry the phosphoserine modification. Residues 274-292 (KMDEQGKGSRDSVHHTSGD) are compositionally biased toward basic and acidic residues. An SH3 domain is found at 296-357 (DYANFYQGLW…PKAYLMEMYD (62 aa)).

The protein belongs to the SKAP family. In terms of assembly, interacts with LAT, GRB2, PTK2B and PRAM1. Homodimer. Interacts with FYB1, which is required for SKAP2 protein stability. Interacts with PTPNS1. Part of a complex consisting of SKAP2, FYB1 and PTPNS1. Part of a complex consisting of SKAP2, FYB1 and PIRB. May interact with actin. May interact with FYN, HCK and LYN. Interacts with FASLG. In terms of processing, dephosphorylated on Tyr-75 by PTPN22. Phosphorylated by FYN on Tyr-260. In case of infection with Y.pseudotuberculosis, dephosphorylated by bacterial phosphatase yopH. As to expression, expressed in kidney, lung, liver, spleen, bone marrow and testis. Present in T-cells, B-cells, and all cells of the myelomonocytic lineage. Present in all brain regions, with highest levels in neurons from the Purkinje cell layer, hippocampal gyrus, cortex and substantia nigra (at protein level).

The protein localises to the cytoplasm. Its function is as follows. May be involved in B-cell and macrophage adhesion processes. In B-cells, may act by coupling the B-cell receptor (BCR) to integrin activation. May play a role in src signaling pathway. This chain is Src kinase-associated phosphoprotein 2 (Skap2), found in Mus musculus (Mouse).